The following is a 544-amino-acid chain: pH-responsive protein 2 (544 aa).

The first 22 residues, 1–22 (MLLKSLFPSILAATSFVSSVAA), serve as a signal peptide directing secretion. Residues Asn-40 and Asn-59 are each glycosylated (N-linked (GlcNAc...) asparagine). Cys-72 and Cys-101 are oxidised to a cystine. The N-linked (GlcNAc...) asparagine glycan is linked to Asn-147. Cystine bridges form between Cys-214-Cys-347, Cys-232-Cys-263, Cys-369-Cys-420, Cys-378-Cys-444, and Cys-397-Cys-402. N-linked (GlcNAc...) asparagine glycosylation occurs at Asn-408. The interval 469-514 (GSSGLGTVSGTVRTDTSQSTSDSGSGSSSSSSSSSSSSSSGSSGSK) is disordered. Ser-515 is lipidated: GPI-anchor amidated serine. A propeptide spans 516–544 (AASIVSVNLLTKIATIGISIVVGFGLITM) (removed in mature form).

It belongs to the glycosyl hydrolase 72 family.

Its subcellular location is the cell membrane. In terms of biological role, required for apical cell growth and plays an essential role in morphogenesis. May be integral to the pathogenic ability of the organism. The polypeptide is pH-responsive protein 2 (PHR2) (Candida albicans (strain SC5314 / ATCC MYA-2876) (Yeast)).